The following is an 897-amino-acid chain: 3'-5' exonuclease DinG (897 aa).

The 154-residue stretch at 8-161 (VVDLETTGNQ…DEDAATTAKL (154 aa)) folds into the Exonuclease domain. In terms of domain architecture, Helicase ATP-binding spans 241 to 496 (SKAVDQLGLT…KAIDQLEKQR (256 aa)). 276–283 (ASLGSGKS) contacts ATP. Residues 448 to 451 (DEAH) carry the DEAH box motif. The 191-residue stretch at 703–893 (NIDEYVASIV…QFGKLLRQIQ (191 aa)) folds into the Helicase C-terminal domain.

The protein belongs to the helicase family. DinG subfamily. Type 2 sub-subfamily.

In terms of biological role, 3'-5' exonuclease. This Staphylococcus aureus (strain USA300) protein is 3'-5' exonuclease DinG.